Here is a 542-residue protein sequence, read N- to C-terminus: DNA-binding protein modulo (542 aa).

The interval 1–166 (MAQKKAVTVK…RGIPKVKVGK (166 aa)) is disordered. Phosphoserine occurs at positions 42 and 44. Acidic residues predominate over residues 59–114 (SEEDESDVEEQNDEQPGDDSDFETEEAAGLIDDEAEEDEEYNSDDEEDDDDDELEP). A phosphoserine mark is found at Ser120, Ser129, and Ser142. The span at 123–135 (ADEVDESDDDEEA) shows a compositional bias: acidic residues. Over residues 136-158 (PVEKPVSKKSEKANSEKSEENRG) the composition is skewed to basic and acidic residues. 4 RRM domains span residues 175–251 (QIVF…QPRN), 258–331 (RTVV…RISQ), 340–429 (LTLV…NLTS), and 420–489 (RAIL…PNSL). Ser304 is subject to Phosphoserine. Ser330 is modified (phosphoserine; by PKA). Ser443 carries the post-translational modification Phosphoserine. Residues 505–542 (RAPRKFQKDTKPNFGKKPFNKRPAQENGGKSFVKRARF) are disordered.

Post-translationally, the N-terminus is blocked.

The protein localises to the nucleus. In terms of biological role, its capacity to bind DNA and protein(s), and its differential expression during development suggest a role in the regulation of gene expression during Drosophila development. It could, in interaction with other factors, be required for the translation of instructions provided by pattern forming genes and controls, via chromatin changes, the activity of genes critical for the process of morphogenesis of several embryonic territories. This chain is DNA-binding protein modulo (mod), found in Drosophila melanogaster (Fruit fly).